Consider the following 341-residue polypeptide: MANSSGSSRNLTAADWGGFDDNMQSGGGAAVIDMENMDDTSGSSFEDMGEIHQHMKEEEEEVEGEGVPEDGEEDGAFLGMKGVQGQLGRQVADEMWQAGKRQASKAFNLYANIDILRPYFDVEPIQVRHRLLESMIPVKMISFPQKIAGELYGPLMLVFTMVAILLHGMKSSGTIIREGTLMGTAIGTCFGYWLGVSSFIYFLAYLCNAQITMLQTLSLLGYGLFGHCIVLFITYNIHFHSLFYIFWLCIGGLSTLRMVAVLLSRTVGHTQRLIVCGTMAALHMLFLLYLHFAYHKVVEGILDTLDGQNVPLPIQRVARDLPVGPNTVLNATVQVLLAHSR.

The Cytoplasmic segment spans residues 1-146 (MANSSGSSRN…PVKMISFPQK (146 aa)). Residues 26 to 46 (GGGAAVIDMENMDDTSGSSFE) form a disordered region. Residues 147–167 (IAGELYGPLMLVFTMVAILLH) form a helical membrane-spanning segment. At 168-185 (GMKSSGTIIREGTLMGTA) the chain is on the lumenal side. Residues 186–206 (IGTCFGYWLGVSSFIYFLAYL) traverse the membrane as a helical segment. Residues 207–212 (CNAQIT) are Cytoplasmic-facing. A helical transmembrane segment spans residues 213 to 233 (MLQTLSLLGYGLFGHCIVLFI). Residues 234 to 242 (TYNIHFHSL) lie on the Lumenal side of the membrane. Residues 243 to 263 (FYIFWLCIGGLSTLRMVAVLL) traverse the membrane as a helical segment. Residues 264–272 (SRTVGHTQR) are Cytoplasmic-facing. Residues 273–293 (LIVCGTMAALHMLFLLYLHFA) traverse the membrane as a helical segment. Topologically, residues 294 to 341 (YHKVVEGILDTLDGQNVPLPIQRVARDLPVGPNTVLNATVQVLLAHSR) are lumenal. Asn330 carries N-linked (GlcNAc...) asparagine glycosylation.

The protein belongs to the YIP1 family.

It is found in the cell membrane. The protein localises to the golgi apparatus. It localises to the cis-Golgi network membrane. Its subcellular location is the cytoplasm. In terms of biological role, involved in the maintenance of the Golgi structure. May play a role in hematopoiesis. In Xenopus laevis (African clawed frog), this protein is Protein YIPF3 (yipf3).